Consider the following 92-residue polypeptide: Small ribosomal subunit protein uS19 (92 aa).

It belongs to the universal ribosomal protein uS19 family.

Functionally, protein S19 forms a complex with S13 that binds strongly to the 16S ribosomal RNA. This chain is Small ribosomal subunit protein uS19, found in Chelativorans sp. (strain BNC1).